Consider the following 146-residue polypeptide: Ribonuclease H (146 aa).

The region spanning Glu4–Ser145 is the RNase H type-1 domain. Residues Asp13, Glu51, Asp73, and Asp137 each coordinate Mg(2+).

Belongs to the RNase H family. As to quaternary structure, monomer. Mg(2+) serves as cofactor.

Its subcellular location is the cytoplasm. The enzyme catalyses Endonucleolytic cleavage to 5'-phosphomonoester.. Functionally, endonuclease that specifically degrades the RNA of RNA-DNA hybrids. This Ehrlichia canis (strain Jake) protein is Ribonuclease H.